A 149-amino-acid polypeptide reads, in one-letter code: Large ribosomal subunit protein bL9 (149 aa).

Belongs to the bacterial ribosomal protein bL9 family.

Binds to the 23S rRNA. This is Large ribosomal subunit protein bL9 from Fervidobacterium nodosum (strain ATCC 35602 / DSM 5306 / Rt17-B1).